Reading from the N-terminus, the 235-residue chain is Elongation factor Tu (235 aa).

Residues Lys1–Glu125 form the tr-type G domain. Asn47–Asp50 provides a ligand contact to GTP.

It belongs to the TRAFAC class translation factor GTPase superfamily. Classic translation factor GTPase family. EF-Tu/EF-1A subfamily. As to quaternary structure, monomer.

The protein resides in the cytoplasm. The enzyme catalyses GTP + H2O = GDP + phosphate + H(+). In terms of biological role, GTP hydrolase that promotes the GTP-dependent binding of aminoacyl-tRNA to the A-site of ribosomes during protein biosynthesis. The polypeptide is Elongation factor Tu (tufA) (Gloeothece membranacea (strain PCC 6501 / SAG 26.84)).